The following is a 204-amino-acid chain: MPSLLLIIFVTELVVQLVNTLGATTINDLLWRIYLTLPTPLSLEFAQQRRKQKEYLAVRHELKATSSQDEFAKWAKLRRQHDKLLEDLEKKKASLEAARTKFDRTLTTTRTVSTRSVQWFLPFWYSKEPMFWLPYGWFPYYVEWFASFPRAPMGSVSIVVWQWACTAVIALMIEAATAALVYVAAKQSQKIRQPVPAQSEKKDS.

Residues 1–4 are Lumenal-facing; it reads MPSL. A helical membrane pass occupies residues 5–24; that stretch reads LLIIFVTELVVQLVNTLGAT. Topologically, residues 25-110 are cytoplasmic; the sequence is TINDLLWRIY…KFDRTLTTTR (86 aa). Residues 72–107 are a coiled coil; that stretch reads AKWAKLRRQHDKLLEDLEKKKASLEAARTKFDRTLT. The chain crosses the membrane as a helical span at residues 111-131; sequence TVSTRSVQWFLPFWYSKEPMF. The Lumenal portion of the chain corresponds to 132–155; the sequence is WLPYGWFPYYVEWFASFPRAPMGS. The helical transmembrane segment at 156 to 172 threads the bilayer; sequence VSIVVWQWACTAVIALM. The Cytoplasmic portion of the chain corresponds to 173 to 204; sequence IEAATAALVYVAAKQSQKIRQPVPAQSEKKDS.

It belongs to the WRB/GET1 family. In terms of assembly, interacts with GET3.

The protein resides in the endoplasmic reticulum membrane. In terms of biological role, required for the post-translational delivery of tail-anchored (TA) proteins to the endoplasmic reticulum. Acts as a membrane receptor for soluble GET3, which recognizes and selectively binds the transmembrane domain of TA proteins in the cytosol. This chain is Protein GET1, found in Podospora anserina (strain S / ATCC MYA-4624 / DSM 980 / FGSC 10383) (Pleurage anserina).